Consider the following 383-residue polypeptide: BRISC and BRCA1-A complex member 2 (383 aa).

At Met1 the chain carries N-acetylmethionine. Ser2 carries the post-translational modification Phosphoserine. 2 UEV-like regions span residues 30 to 147 (DATN…TLLE) and 275 to 364 (IAAF…RAKA).

The protein belongs to the BABAM2 family. As to quaternary structure, component of the ARISC complex, at least composed of UIMC1/RAP80, ABRAXAS1, BRCC3/BRCC36, BABAM2 and BABAM1/NBA1. Component of the BRCA1-A complex, at least composed of BRCA1, BARD1, UIMC1/RAP80, ABRAXAS1, BRCC3/BRCC36, BABAM2 and BABAM1/NBA1. In the BRCA1-A complex, interacts directly with ABRAXAS1, BRCC3/BRCC36 and BABAM1/NBA1. Binds polyubiquitin. Component of the BRISC complex, at least composed of ABRAXAS2, BRCC3/BRCC36, BABAM2 and BABAM1/NBA1. Identified in a complex with SHMT2 and the other subunits of the BRISC complex. Component of the BRCA1/BRCA2 containing complex (BRCC), which also contains BRCA1, BRCA2, BARD1, BRCC3/BRCC36 and RAD51. BRCC is a ubiquitin E3 ligase complex that enhances cellular survival following DNA damage. May interact with FAS and TNFRSF1A.

Its subcellular location is the cytoplasm. It localises to the nucleus. Its function is as follows. Component of the BRCA1-A complex, a complex that specifically recognizes 'Lys-63'-linked ubiquitinated histones H2A and H2AX at DNA lesions sites, leading to target the BRCA1-BARD1 heterodimer to sites of DNA damage at double-strand breaks (DSBs). The BRCA1-A complex also possesses deubiquitinase activity that specifically removes 'Lys-63'-linked ubiquitin on histones H2A and H2AX. In the BRCA1-A complex, it acts as an adapter that bridges the interaction between BABAM1/NBA1 and the rest of the complex, thereby being required for the complex integrity and modulating the E3 ubiquitin ligase activity of the BRCA1-BARD1 heterodimer. Component of the BRISC complex, a multiprotein complex that specifically cleaves 'Lys-63'-linked ubiquitin in various substrates. Within the BRISC complex, acts as an adapter that bridges the interaction between BABAM1/NBA1 and the rest of the complex, thereby being required for the complex integrity. The BRISC complex is required for normal mitotic spindle assembly and microtubule attachment to kinetochores via its role in deubiquitinating NUMA1. The BRISC complex plays a role in interferon signaling via its role in the deubiquitination of the interferon receptor IFNAR1; deubiquitination increases IFNAR1 activity by enhancing its stability and cell surface expression. Down-regulates the response to bacterial lipopolysaccharide (LPS) via its role in IFNAR1 deubiquitination. May play a role in homeostasis or cellular differentiation in cells of neural, epithelial and germline origins. May also act as a death receptor-associated anti-apoptotic protein, which inhibits the mitochondrial apoptotic pathway. May regulate TNF-alpha signaling through its interactions with TNFRSF1A; however these effects may be indirect. The sequence is that of BRISC and BRCA1-A complex member 2 (BABAM2) from Bos taurus (Bovine).